The sequence spans 475 residues: Ankyrin repeat, SAM and basic leucine zipper domain-containing protein 1 (475 aa).

Positions Met-1–Gly-24 are disordered. Phosphoserine occurs at positions 17, 18, and 20. 6 ANK repeats span residues Glu-45 to Ser-74, Tyr-78 to Phe-107, Asp-110 to Val-144, Arg-148 to Thr-177, Asn-181 to Leu-210, and Asp-214 to Gly-243. Residues Ser-272–Gln-334 enclose the SAM domain.

As to quaternary structure, interacts with DDX4, PIWIL1, RANBP9 and TDRD1.

Its subcellular location is the cytoplasm. Its function is as follows. Plays a central role during spermatogenesis by repressing transposable elements and preventing their mobilization, which is essential for the germline integrity. Acts via the piRNA metabolic process, which mediates the repression of transposable elements during meiosis by forming complexes composed of piRNAs and Piwi proteins and governs the methylation and subsequent repression of transposons. Its association with pi-bodies suggests a participation in the primary piRNAs metabolic process. Required prior to the pachytene stage to facilitate the production of multiple types of piRNAs, including those associated with repeats involved in the regulation of retrotransposons. May act by mediating protein-protein interactions during germ cell maturation. This is Ankyrin repeat, SAM and basic leucine zipper domain-containing protein 1 (ASZ1) from Gorilla gorilla gorilla (Western lowland gorilla).